Here is a 152-residue protein sequence, read N- to C-terminus: Small ribosomal subunit protein uS13 (152 aa).

It belongs to the universal ribosomal protein uS13 family. In terms of assembly, part of the 30S ribosomal subunit. Forms a loose heterodimer with protein S19. Forms two bridges to the 50S subunit in the 70S ribosome.

In terms of biological role, located at the top of the head of the 30S subunit, it contacts several helices of the 16S rRNA. In the 70S ribosome it contacts the 23S rRNA (bridge B1a) and protein L5 of the 50S subunit (bridge B1b), connecting the 2 subunits; these bridges are implicated in subunit movement. This Pyrobaculum arsenaticum (strain DSM 13514 / JCM 11321 / PZ6) protein is Small ribosomal subunit protein uS13.